The following is a 460-amino-acid chain: Omega-3 fatty acid desaturase, chloroplastic (460 aa).

A Histidine box-1 motif is present at residues 177 to 181 (HDCGH). A Histidine box-2 motif is present at residues 213-217 (HRTHH). A Histidine box-3 motif is present at residues 380–384 (HVIHH).

This sequence belongs to the fatty acid desaturase type 1 family.

It localises to the plastid. The protein resides in the chloroplast membrane. The protein operates within lipid metabolism; polyunsaturated fatty acid biosynthesis. Its function is as follows. Chloroplast omega-3 fatty acid desaturase introduces the third double bond in the biosynthesis of 16:3 and 18:3 fatty acids, important constituents of plant membranes. It is thought to use ferredoxin as an electron donor and to act on fatty acids esterified to galactolipids, sulfolipids and phosphatidylglycerol. The protein is Omega-3 fatty acid desaturase, chloroplastic (FAD7A-1) of Ricinus communis (Castor bean).